A 519-amino-acid polypeptide reads, in one-letter code: Cell adhesion molecule CEACAM1 (519 aa).

Residues 1–34 form the signal peptide; the sequence is MELASARLLRGQIPWRGLLLTASLLTYWSPLTTA. Q35 carries the pyrrolidone carboxylic acid modification. Residues 35-425 lie on the Extracellular side of the membrane; that stretch reads QVTVDAVPPN…QGNSGLSEGA (391 aa). Positions 39 to 142 are required for homophilic binding; it reads DAVPPNVVEE…QTSVQFRVYP (104 aa). An Ig-like V-type domain is found at 42–140; sequence PPNVVEEKSV…PIQTSVQFRV (99 aa). Residues N87, N104, N113, N148, N152, N173, N197, N224, N256, N288, N292, N302, N315, and N331 are each glycosylated (N-linked (GlcNAc...) asparagine). Ig-like C2-type domains lie at 147–232, 237–317, and 325–403; these read PNVT…FNLD, PDAP…KNIT, and PSIQ…FRIS. C167 and C215 form a disulfide bridge. C259 and C299 form a disulfide bridge. A disulfide bridge links C344 with C392. N374 is a glycosylation site (N-linked (GlcNAc...) asparagine; atypical). The helical transmembrane segment at 426-446 threads the bilayer; sequence IAGIVIGSVAGVALIAALAYF. Positions 445–457 are interaction with calmodulin; sequence YFLYSRKTGGGSD. At 447 to 519 the chain is on the cytoplasmic side; it reads LYSRKTGGGS…ETVYSVVKKK (73 aa). Residues 447-519 form an interaction with FLNA region; sequence LYSRKTGGGS…ETVYSVVKKK (73 aa). The interval 455 to 519 is disordered; that stretch reads GSDHRDLTEH…ETVYSVVKKK (65 aa). Residues 456–466 are compositionally biased toward basic and acidic residues; the sequence is SDHRDLTEHKP. Residues 484–519 form a required for interaction with PTPN11 and PTPN6 and for control of phosphorylation level region; sequence DDVSYSVLNFNAQQSKRPTSASSSPTETVYSVVKKK. Position 488 is a phosphotyrosine; by SRC, LCK, INSR and EGFR (Y488). The span at 489–512 shows a compositional bias: polar residues; it reads SVLNFNAQQSKRPTSASSSPTETV. Position 503 is a phosphoserine (S503). Y513 carries the post-translational modification Phosphotyrosine; by INSR, SRC and LCK. The segment at 513–516 is essential for interaction with PTPN11 and PTPN6; the sequence is YSVV.

This sequence belongs to the immunoglobulin superfamily. CEA family. As to quaternary structure, monomer. Oligomer. Heterodimer. Homodimer. Cis-dimer/oligomer (via Ig-like C2-type and/or via cytoplasmic domains); induced by trans-homophilic cell adhesion through an allosteric mechanism transmitted by the Ig-like V-type domain, and is regulated by intracellular calcium and calmodulin. Interacts (via cytoplasmic domain) with calmodulin in a calcium dependent manner; reduces homophilic cell adhesion through dissociation of dimer. Isoform 1 interacts (via cytoplasmic domain) with PTPN11 (preferentially) and PTPN6; cis-homodimer form is preferred; this interaction is decreased by formation of isoform 1 / isoform 2 cis-heterodimers and is dependent on the monomer/dimer equilibrium; this interaction is phosphorylation-dependent. Isoform 1 interacts with LYN. Isoform 1 interacts (via cytoplasmic domain) with SRC (via SH2 domain); this interaction is regulated by trans-homophilic cell adhesion. Isoform 1 interacts (via cytoplasmic domain) with LCK; mediates phosphorylation at Tyr-488 and Tyr-513 resulting in PTPN6 association. Isoform 1 interacts with PTPN6; this interaction is phosphorylation-dependent and causes a profound decrease in TCR stimulation-induced CD247 and ZAP70 phosphorylation. Isoform 1 interacts with TCR/CD3 complex through TCR beta chain and CD3E; colocalizes at the cell surface and upon stimulation of the TCR/CD3 complex recruits PTPN6 in the TCR/CD3 complex, resulting in dephosphorylation of CD247 and ZAP70. Isoform 1 interacts (via cytoplasmic domain) with SHC1 (via SH2 domain); SHC1 mediates interaction with INSR or EGFR in a Ser-503 phosphorylation-dependent manner. Isoform 1 interacts with EGFR; the interaction is indirect. Isoform 1 interacts with CSF3R; down-regulates the CSF3R-STAT3 pathway through recruitment of PTPN6 that dephosphorylates CSF3R. Isoform 1 (phosphorylated form) interacts with TLR4 and SYK; recruits PTPN6 that dephosphorylates SYK, reducing the production of reactive oxygen species (ROS) and lysosome disruption, leading to a reduction of the inflammasome activity. Isoform 1 interacts with FLNA; inhibits cell migration and cell scattering by interfering with the interaction of FLNA with RALA. Isoform 1 interacts (via cytoplasmic domain) with PXN; the interaction is phosphotyrosyl-dependent. Isoform 1 interacts with KLRK1; recruits PTPN6 that dephosphorylates VAV1. Isoform 1 interacts with CEACAM8. Isoform 1 interacts with FASN; this interaction is insulin and phosphorylation-dependent; reduces fatty-acid synthase activity. Interacts (via Ig-like V-type) with HAVCR2 (via Ig-like V-type); facilitates the maturation and cell surface expression of HAVCR2 thereby regulating T-cell tolerance induction. Isoform 2 interacts (via the cytoplasmic domain) with ANXA2; this interaction is regulated by phosphorylation and appears in the AIIt complex. Interacts (via Lewis X moieties) with CD209 (via C-type lectin domain); this interaction is regulated by the glycosylation pattern of CEACAM1 on cell types and regulates contact between dendritic cells and neutrophils. Post-translationally, phosphorylated on serine and tyrosine. Isoform 1 is phosphorylated on tyrosine by Src family kinases like SRC and LCK and by receptor like CSF3R, EGFR and INSR upon stimulation. Phosphorylated at Ser-503; mediates activity. Phosphorylated at Tyr-488; regulates activity. Phosphorylated at Tyr-488 by EGFR and INSR upon stimulation; this phosphorylation is Ser-503-phosphorylation-dependent; mediates cellular internalization; increases interaction with FASN. Phosphorylated at Tyr-488 and Tyr-513 by LCK; mediates PTPN6 association and is regulated by homophilic ligation of CEACAM1 in the absence of T-cell activation. Phosphorylated at Tyr-513; mediates interaction with PTPN11. Phosphorylated on serine and threonine. As to expression, expressed in epithelia, vessel endothelia, leukocytes and platelets. Isoform 1 and isoform 2 are highly expressed in liver and intestine, moderately in lung, and weakly in muscle, kidney, and spleen. Expressed in granulocytes, lymphocytes, granulocytes, B cells, and T-cells.

The protein resides in the cell membrane. Its subcellular location is the lateral cell membrane. The protein localises to the apical cell membrane. It is found in the basal cell membrane. It localises to the cell junction. The protein resides in the adherens junction. Its subcellular location is the cytoplasmic vesicle. The protein localises to the secretory vesicle. It is found in the cell projection. It localises to the microvillus membrane. Cell adhesion protein that mediates homophilic cell adhesion in a calcium-independent manner. Plays a role as coinhibitory receptor in immune response, insulin action and also functions as an activator during angiogenesis. Its coinhibitory receptor function is phosphorylation- and PTPN6 -dependent, which in turn, suppress signal transduction of associated receptors by dephosphorylation of their downstream effectors. Plays a role in immune response, of T-cells, natural killer (NK) and neutrophils. Upon TCR/CD3 complex stimulation, inhibits TCR-mediated cytotoxicity by blocking granule exocytosis by mediating homophilic binding to adjacent cells, allowing interaction with and phosphorylation by LCK and interaction with the TCR/CD3 complex which recruits PTPN6 resulting in dephosphorylation of CD247 and ZAP70. Also inhibits T-cell proliferation and cytokine production through inhibition of JNK cascade and plays a crucial role in regulating autoimmunity and anti-tumor immunity by inhibiting T-cell through its interaction with HAVCR2. Upon natural killer (NK) cells activation, inhibit KLRK1-mediated cytolysis of CEACAM1-bearing tumor cells by trans-homophilic interactions with CEACAM1 on the target cell and lead to cis-interaction between CEACAM1 and KLRK1, allowing PTPN6 recruitment and then VAV1 dephosphorylation. Upon neutrophils activation negatively regulates IL1B production by recruiting PTPN6 to a SYK-TLR4-CEACAM1 complex, that dephosphorylates SYK, reducing the production of reactive oxygen species (ROS) and lysosome disruption, which in turn, reduces the activity of the inflammasome. Down-regulates neutrophil production by acting as a coinhibitory receptor for CSF3R by downregulating the CSF3R-STAT3 pathway through recruitment of PTPN6 that dephosphorylates CSF3R. Also regulates insulin action by promoting INS clearance and regulating lipogenesis in liver through regulating insulin signaling. Upon INS stimulation, undergoes phosphorylation by INSR leading to INS clearance by increasing receptor-mediated insulin endocytosis. This inernalization promotes interaction with FASN leading to receptor-mediated insulin degradation and to reduction of FASN activity leading to negative regulation of fatty acid synthesis. INSR-mediated phosphorylation also provokes a down-regulation of cell proliferation through SHC1 interaction resulting in decrease coupling of SHC1 to the MAPK3/ERK1-MAPK1/ERK2 and phosphatidylinositol 3-kinase pathways. Functions as activator in angiogenesis by promoting blood vessel remodeling through endothelial cell differentiation and migration and in arteriogenesis by increasing the number of collateral arteries and collateral vessel calibers after ischemia. Also regulates vascular permeability through the VEGFR2 signaling pathway resulting in control of nitric oxide production. Down-regulates cell growth in response to EGF through its interaction with SHC1 that mediates interaction with EGFR resulting in decrease coupling of SHC1 to the MAPK3/ERK1-MAPK1/ERK2 pathway. Negatively regulates platelet aggregation by decreasing platelet adhesion on type I collagen through the GPVI-FcRgamma complex. Inhibits cell migration and cell scattering through interaction with FLNA; interferes with the interaction of FLNA with RALA. Mediates bile acid transport activity in a phosphorylation dependent manner. Negatively regulates osteoclastogenesis. In terms of biological role, cell adhesion proteins that mediates homophilic cell adhesion in a calcium-independent manner. Promotes populations of T-cells regulating IgA production and secretion associated with control of the commensal microbiota and resistance to enteropathogens. This Rattus norvegicus (Rat) protein is Cell adhesion molecule CEACAM1.